Consider the following 1025-residue polypeptide: Multidrug resistance protein MdtC (1025 aa).

The next 12 membrane-spanning stretches (helical) occupy residues 3–23, 333–353, 360–380, 387–407, 431–451, 463–483, 528–548, 853–873, 875–895, 897–917, 953–973, and 984–1004; these read FFAL…AITL, EVEQ…FLFL, IIPA…MYLC, LSLM…IVVL, VGFT…PLLL, FAVT…TLTP, LVGV…ISIP, VILI…LYES, VHPL…LLAL, LFNA…IGIV, PIMM…LSGG, and ITIV…TPVV.

The protein belongs to the resistance-nodulation-cell division (RND) (TC 2.A.6) family. MdtC subfamily. As to quaternary structure, part of a tripartite efflux system composed of MdtA, MdtB and MdtC. MdtC forms a heteromultimer with MdtB.

The protein localises to the cell inner membrane. Its function is as follows. The MdtABC tripartite complex confers resistance against novobiocin and deoxycholate. The sequence is that of Multidrug resistance protein MdtC from Escherichia coli (strain UTI89 / UPEC).